The primary structure comprises 248 residues: MTLISAPRIGIAGITGRLGTLCAEEAGSALVGGLSRTADPQRNITTDPAALAKNCDVVIDVSHASTVPAHAAAFAQAGCAWVLGTTGLDQGAQDAVNAAAQHIPVLQAANFSPALTLFLELARQLGAGLPDYDAEILEVHHRQKLDAPSGTALAIGRAVAEGRGVSFEDVARTDQNGRRPDGAIGFASLRGGQIVGEHDLVLMAADEQITLSHRALDRRVFARGALLAARWLAGRPAGLYTMADALKR.

13 to 18 (GITGRL) contacts NAD(+). Arg-36 lines the NADP(+) pocket. NAD(+) is bound by residues 84-86 (GTT) and 108-111 (AANF). His-140 serves as the catalytic Proton donor/acceptor. His-141 contacts (S)-2,3,4,5-tetrahydrodipicolinate. Lys-144 acts as the Proton donor in catalysis. A (S)-2,3,4,5-tetrahydrodipicolinate-binding site is contributed by 150–151 (GT).

The protein belongs to the DapB family.

It localises to the cytoplasm. It catalyses the reaction (S)-2,3,4,5-tetrahydrodipicolinate + NAD(+) + H2O = (2S,4S)-4-hydroxy-2,3,4,5-tetrahydrodipicolinate + NADH + H(+). It carries out the reaction (S)-2,3,4,5-tetrahydrodipicolinate + NADP(+) + H2O = (2S,4S)-4-hydroxy-2,3,4,5-tetrahydrodipicolinate + NADPH + H(+). It functions in the pathway amino-acid biosynthesis; L-lysine biosynthesis via DAP pathway; (S)-tetrahydrodipicolinate from L-aspartate: step 4/4. Catalyzes the conversion of 4-hydroxy-tetrahydrodipicolinate (HTPA) to tetrahydrodipicolinate. The polypeptide is 4-hydroxy-tetrahydrodipicolinate reductase (Gluconobacter oxydans (strain 621H) (Gluconobacter suboxydans)).